The primary structure comprises 375 residues: Outer membrane porin OmpD (375 aa).

Residues 1–34 (MRKHAKKIIRIIKMKLKLVAVAVTSLLAAGVVNA) form the signal peptide.

This sequence belongs to the Gram-negative porin family. Homotrimer. Mixed heterotrimers with other porins are also probable.

It is found in the cell outer membrane. Its function is as follows. Forms pores that allow passive diffusion of small molecules across the outer membrane. The sequence is that of Outer membrane porin OmpD from Salmonella typhimurium (strain SL1344).